The following is a 545-amino-acid chain: 2-succinyl-5-enolpyruvyl-6-hydroxy-3-cyclohexene-1-carboxylate synthase (545 aa).

The segment at 184-209 (PLVPDPEPHGAPTPAGRPGGRPWTYT) is disordered. The segment covering 195-205 (PTPAGRPGGRP) has biased composition (low complexity).

It belongs to the TPP enzyme family. MenD subfamily. As to quaternary structure, homodimer. Mg(2+) is required as a cofactor. Requires Mn(2+) as cofactor. The cofactor is thiamine diphosphate.

It carries out the reaction isochorismate + 2-oxoglutarate + H(+) = 5-enolpyruvoyl-6-hydroxy-2-succinyl-cyclohex-3-ene-1-carboxylate + CO2. It participates in quinol/quinone metabolism; 1,4-dihydroxy-2-naphthoate biosynthesis; 1,4-dihydroxy-2-naphthoate from chorismate: step 2/7. It functions in the pathway quinol/quinone metabolism; menaquinone biosynthesis. Functionally, catalyzes the thiamine diphosphate-dependent decarboxylation of 2-oxoglutarate and the subsequent addition of the resulting succinic semialdehyde-thiamine pyrophosphate anion to isochorismate to yield 2-succinyl-5-enolpyruvyl-6-hydroxy-3-cyclohexene-1-carboxylate (SEPHCHC). The sequence is that of 2-succinyl-5-enolpyruvyl-6-hydroxy-3-cyclohexene-1-carboxylate synthase from Mycobacterium avium (strain 104).